Here is a 438-residue protein sequence, read N- to C-terminus: tRNA-dihydrouridine(16/17) synthase [NAD(P)(+)]-like (438 aa).

FMN-binding positions include 23-25 and Gln79; that span reads PMV. The Proton donor role is filled by Cys108. Residues Lys147, His175, 208-210, and 232-233 each bind FMN; these read NGN and AE. The disordered stretch occupies residues 343 to 387; sequence GPKEGSKENSSGRSKRALEEEEGSMEGLSKNKLKKQLRNPHKTFD. Over residues 373–383 the composition is skewed to basic residues; the sequence is NKLKKQLRNPH.

This sequence belongs to the Dus family. Dus1 subfamily. Requires FMN as cofactor.

It localises to the cytoplasm. It is found in the nucleus. It catalyses the reaction 5,6-dihydrouridine(16) in tRNA + NADP(+) = uridine(16) in tRNA + NADPH + H(+). The enzyme catalyses 5,6-dihydrouridine(16) in tRNA + NAD(+) = uridine(16) in tRNA + NADH + H(+). The catalysed reaction is 5,6-dihydrouridine(17) in tRNA + NAD(+) = uridine(17) in tRNA + NADH + H(+). It carries out the reaction 5,6-dihydrouridine(17) in tRNA + NADP(+) = uridine(17) in tRNA + NADPH + H(+). In terms of biological role, catalyzes the synthesis of dihydrouridine, a modified base found in the D-loop of most tRNAs. Specifically modifies U16 and U17 in cytoplasmic tRNAs. Affects the level of some mature tRNA and thereby the total cellular translation. In Rattus norvegicus (Rat), this protein is tRNA-dihydrouridine(16/17) synthase [NAD(P)(+)]-like (Dus1l).